The sequence spans 438 residues: DNA polymerase IV 1 (438 aa).

Positions 46–226 constitute a UmuC domain; sequence LAHIDCDAFY…KPVTMIWGVG (181 aa). The Mg(2+) site is built by Asp50 and Asp143. Residue Glu144 is part of the active site.

The protein belongs to the DNA polymerase type-Y family. As to quaternary structure, monomer. Requires Mg(2+) as cofactor.

It is found in the cytoplasm. The enzyme catalyses DNA(n) + a 2'-deoxyribonucleoside 5'-triphosphate = DNA(n+1) + diphosphate. Its function is as follows. Poorly processive, error-prone DNA polymerase involved in untargeted mutagenesis. Copies undamaged DNA at stalled replication forks, which arise in vivo from mismatched or misaligned primer ends. These misaligned primers can be extended by PolIV. Exhibits no 3'-5' exonuclease (proofreading) activity. May be involved in translesional synthesis, in conjunction with the beta clamp from PolIII. In Mesorhizobium japonicum (strain LMG 29417 / CECT 9101 / MAFF 303099) (Mesorhizobium loti (strain MAFF 303099)), this protein is DNA polymerase IV 1 (dinB1).